The following is a 941-amino-acid chain: Cilia- and flagella-associated protein 69 (941 aa).

It is found in the cell projection. Its subcellular location is the cilium. The protein localises to the flagellum. Functionally, cilium- and flagellum-associated protein. In the olfactory epithelium, regulates the speed of activation and termination of the odor response and thus contributes to the robustness of olfactory transduction pathways. Required for sperm flagellum assembly and stability. This is Cilia- and flagella-associated protein 69 from Callithrix jacchus (White-tufted-ear marmoset).